The sequence spans 142 residues: Peptide methionine sulfoxide reductase MsrB (142 aa).

One can recognise a MsrB domain in the interval 2–125; sequence IKKNKEELND…NSAAIQFIPY (124 aa). Residue C114 is the Nucleophile of the active site.

The protein belongs to the MsrB Met sulfoxide reductase family.

The catalysed reaction is L-methionyl-[protein] + [thioredoxin]-disulfide + H2O = L-methionyl-(R)-S-oxide-[protein] + [thioredoxin]-dithiol. In Staphylococcus epidermidis (strain ATCC 35984 / DSM 28319 / BCRC 17069 / CCUG 31568 / BM 3577 / RP62A), this protein is Peptide methionine sulfoxide reductase MsrB.